The primary structure comprises 321 residues: D-alanine--D-alanine ligase (321 aa).

Positions 121–315 (RIWFLTNNIN…FTNLIEEIIK (195 aa)) constitute an ATP-grasp domain. 147-199 (PMKRPYVIKPLTQGSSIGVEVIFAEDDFNFADYDFPYGDQVIIEQYIKGRELQ) is an ATP binding site. Mg(2+)-binding residues include glutamate 268, glutamate 282, and asparagine 284.

The protein belongs to the D-alanine--D-alanine ligase family. Requires Mg(2+) as cofactor. The cofactor is Mn(2+).

It is found in the cytoplasm. The enzyme catalyses 2 D-alanine + ATP = D-alanyl-D-alanine + ADP + phosphate + H(+). The protein operates within cell wall biogenesis; peptidoglycan biosynthesis. In terms of biological role, cell wall formation. The polypeptide is D-alanine--D-alanine ligase (Rickettsia africae (strain ESF-5)).